We begin with the raw amino-acid sequence, 271 residues long: Putative pyruvate, phosphate dikinase regulatory protein (271 aa).

Residue 147–154 (GLSRTSKT) participates in ADP binding.

This sequence belongs to the pyruvate, phosphate/water dikinase regulatory protein family. PDRP subfamily.

The enzyme catalyses N(tele)-phospho-L-histidyl/L-threonyl-[pyruvate, phosphate dikinase] + ADP = N(tele)-phospho-L-histidyl/O-phospho-L-threonyl-[pyruvate, phosphate dikinase] + AMP + H(+). It catalyses the reaction N(tele)-phospho-L-histidyl/O-phospho-L-threonyl-[pyruvate, phosphate dikinase] + phosphate + H(+) = N(tele)-phospho-L-histidyl/L-threonyl-[pyruvate, phosphate dikinase] + diphosphate. Its function is as follows. Bifunctional serine/threonine kinase and phosphorylase involved in the regulation of the pyruvate, phosphate dikinase (PPDK) by catalyzing its phosphorylation/dephosphorylation. The chain is Putative pyruvate, phosphate dikinase regulatory protein from Clostridium tetani (strain Massachusetts / E88).